The primary structure comprises 516 residues: Cytochrome P450 monooxygenase asR2 (516 aa).

The helical transmembrane segment at 9–29 (LNSITFSLLVFLGFVGVSQLI) threads the bilayer. N-linked (GlcNAc...) asparagine glycosylation is found at Asn248 and Asn273. Residue Cys461 coordinates heme.

This sequence belongs to the cytochrome P450 family. Heme is required as a cofactor.

It is found in the membrane. The protein operates within secondary metabolite biosynthesis; terpenoid biosynthesis. In terms of biological role, cytochrome P450 monooxygenase; part of the gene cluster that mediates the biosynthesis of xenovulene A, an unusual meroterpenoid that has potent inhibitory effects on the human gamma-aminobutyrate A (GABAA) benzodiazepine receptor. The first step of xenovulene A biosynthesis is the biosynthesis of 3-methylorcinaldehyde performed by the non-reducing polyketide synthase aspks1. The salicylate hydroxylase asL1 then catalyzes the oxidative dearomatization of 3-methylorcinaldehyde to yield a dearomatized hydroxycyclohexadione. The 2-oxoglutarate-dependent dioxygenase asL3 further catalyzes the oxidative ring expansion to provide the first tropolone metabolite. The cytochrome P450 monooxygenase asR2 allows the synthesis of tropolone hemiacetal. In parallel, a previously unrecognised class of terpene cyclase, asR6, produces alpha-humulene from farnesylpyrophosphate (FPP). The putative Diels-Alderase asR5 probably catalyzes the formation of the tropolone-humulene skeleton by linking humulene and the polyketide moiety. Oxidative-ring contractions catalyzed by asL4 and asL6 then processively remove carbon atoms from the polyketide to yield xenovulene A. This is Cytochrome P450 monooxygenase asR2 from Sarocladium schorii (Acremonium strictum (strain IMI 501407)).